Here is a 316-residue protein sequence, read N- to C-terminus: Deoxyribonuclease-1-like 1 (316 aa).

A signal peptide spans 1–28; that stretch reads MHSSGGFQKAIHGHALLLLLLLASGAET. Active-site residues include E107 and H158. C197 and C234 are joined by a disulfide. N271 carries N-linked (GlcNAc...) asparagine glycosylation.

This sequence belongs to the DNase I family.

It is found in the endoplasmic reticulum. The chain is Deoxyribonuclease-1-like 1 (DNASE1L1) from Bos taurus (Bovine).